Reading from the N-terminus, the 345-residue chain is Probable S-adenosylmethionine carrier 2, chloroplastic (345 aa).

Residues Met1–Ser31 constitute a chloroplast transit peptide. Solcar repeat units follow at residues Arg76–Lys148, Leu157–Gly239, and Glu252–Ile334. The next 5 membrane-spanning stretches (helical) occupy residues Leu82–Ile102, Tyr121–Val141, Asn156–Val176, Ala254–Ile274, and Gly309–Glu329.

The protein belongs to the mitochondrial carrier (TC 2.A.29) family. As to expression, expressed at low levels in seedlings, leaves, flowers, stems and roots.

The protein localises to the plastid. The protein resides in the chloroplast membrane. Probable S-adenosylmethionine (SAM) transporter able to catalyze both uniport and exchange reactions through membranes. The chain is Probable S-adenosylmethionine carrier 2, chloroplastic (SAMC2) from Arabidopsis thaliana (Mouse-ear cress).